A 431-amino-acid chain; its full sequence is Glutamate--tRNA ligase 1 (431 aa).

Positions 6–16 (PSPTGDMHIGN) match the 'HIGH' region motif. Residues 235-239 (KMSKR) carry the 'KMSKS' region motif. ATP is bound at residue lysine 238.

This sequence belongs to the class-I aminoacyl-tRNA synthetase family. Glutamate--tRNA ligase type 1 subfamily. In terms of assembly, monomer.

It is found in the cytoplasm. It catalyses the reaction tRNA(Glu) + L-glutamate + ATP = L-glutamyl-tRNA(Glu) + AMP + diphosphate. Functionally, catalyzes the attachment of glutamate to tRNA(Glu) in a two-step reaction: glutamate is first activated by ATP to form Glu-AMP and then transferred to the acceptor end of tRNA(Glu). This is Glutamate--tRNA ligase 1 from Campylobacter concisus (strain 13826).